The following is a 336-amino-acid chain: Fructose-1,6-bisphosphatase class 1 (336 aa).

Mg(2+)-binding residues include Glu92, Asp115, Leu117, and Asp118. Substrate is bound by residues Asp118–Ser121, Asn211, Tyr244, Tyr262–Tyr264, and Lys274. Glu280 provides a ligand contact to Mg(2+).

It belongs to the FBPase class 1 family. In terms of assembly, homotetramer. It depends on Mg(2+) as a cofactor.

It is found in the cytoplasm. The catalysed reaction is beta-D-fructose 1,6-bisphosphate + H2O = beta-D-fructose 6-phosphate + phosphate. Its pathway is carbohydrate biosynthesis; gluconeogenesis. The sequence is that of Fructose-1,6-bisphosphatase class 1 from Aliivibrio fischeri (strain ATCC 700601 / ES114) (Vibrio fischeri).